The following is a 313-amino-acid chain: Formimidoylglutamase (313 aa).

Mn(2+) contacts are provided by H130, D155, H157, D159, D241, and D243.

Belongs to the arginase family. It depends on Mn(2+) as a cofactor.

It catalyses the reaction N-formimidoyl-L-glutamate + H2O = formamide + L-glutamate. Its pathway is amino-acid degradation; L-histidine degradation into L-glutamate; L-glutamate from N-formimidoyl-L-glutamate (hydrolase route): step 1/1. Its function is as follows. Catalyzes the conversion of N-formimidoyl-L-glutamate to L-glutamate and formamide. The chain is Formimidoylglutamase from Salmonella agona (strain SL483).